Reading from the N-terminus, the 373-residue chain is Probable tRNA sulfurtransferase (373 aa).

In terms of domain architecture, THUMP spans 54 to 158 (NKNIEELSKV…NDVAYFYHKI (105 aa)). Residues 176 to 177 (LF), 201 to 202 (NF), Lys-256, Gly-278, and Gln-287 contribute to the ATP site.

It belongs to the ThiI family.

Its subcellular location is the cytoplasm. The catalysed reaction is [ThiI sulfur-carrier protein]-S-sulfanyl-L-cysteine + a uridine in tRNA + 2 reduced [2Fe-2S]-[ferredoxin] + ATP + H(+) = [ThiI sulfur-carrier protein]-L-cysteine + a 4-thiouridine in tRNA + 2 oxidized [2Fe-2S]-[ferredoxin] + AMP + diphosphate. The enzyme catalyses [ThiS sulfur-carrier protein]-C-terminal Gly-Gly-AMP + S-sulfanyl-L-cysteinyl-[cysteine desulfurase] + AH2 = [ThiS sulfur-carrier protein]-C-terminal-Gly-aminoethanethioate + L-cysteinyl-[cysteine desulfurase] + A + AMP + 2 H(+). The protein operates within cofactor biosynthesis; thiamine diphosphate biosynthesis. Catalyzes the ATP-dependent transfer of a sulfur to tRNA to produce 4-thiouridine in position 8 of tRNAs, which functions as a near-UV photosensor. Also catalyzes the transfer of sulfur to the sulfur carrier protein ThiS, forming ThiS-thiocarboxylate. This is a step in the synthesis of thiazole, in the thiamine biosynthesis pathway. The sulfur is donated as persulfide by IscS. This is Probable tRNA sulfurtransferase from Saccharolobus islandicus (strain M.16.4 / Kamchatka #3) (Sulfolobus islandicus).